Consider the following 339-residue polypeptide: Chromo domain-containing protein cec-3 (339 aa).

The segment at Met1–Asp21 is disordered. A Chromo domain is found at Phe24–Leu84. A compositionally biased stretch (basic residues) spans Gln91–Lys105. Disordered stretches follow at residues Gln91–Ser199 and Glu215–Leu272. Basic and acidic residues-rich tracts occupy residues Thr106 to Asp117 and Ala171 to Leu183. A compositionally biased stretch (acidic residues) spans Asp184–Glu193. A compositionally biased stretch (basic and acidic residues) spans Lys230–Ser241. Positions Glu242–Val251 are enriched in low complexity.

Expressed in every cell of the embryo (at protein level). In adults, expressed predominantly in the head region and the germline.

Its subcellular location is the chromosome. The protein localises to the nucleus. In terms of biological role, specifically recognizes and binds methylated 'Lys-9' of histone H3 (H3K9me), with highest preference for trimethylated 'Lys-9' (H3K9me3) followed by dimethylated 'Lys-9' (H3K9me2) followed by monomethylated 'Lys-9' (H3K9me1). Plays a role in maintaining correct unc-4 expression in the VC motor neurons where unc-4 is expressed in the vulval but not in the non-vulval VC neurons. The protein is Chromo domain-containing protein cec-3 (cec-3) of Caenorhabditis elegans.